The sequence spans 338 residues: Transcription factor MYB76 (338 aa).

HTH myb-type domains are found at residues G9–I65 and K66–L116. 2 consecutive DNA-binding regions (H-T-H motif) follow at residues W37–L61 and W89–L112. 2 disordered regions span residues P123–L171 and S176–R195. Residues M140–S154 are compositionally biased toward basic and acidic residues. Positions S155 to L171 are enriched in low complexity.

Can form complexes with MYC2, MYC3 or MYC4. As to expression, expressed in both vegetative and generative organs. Mostly present in inflorescences, flowers and seedlings, in the transition zone between roots and the foliar part, and stems, and, to a lower extent, in leaves (in midvein and trichomes).

The protein resides in the nucleus. Its function is as follows. Plays a role in determining the spatial distribution of aliphatic glucosinolates (AGLSs) within the leaf, mostly short chained. Together with MYB28/HAG1 and MYB29/HAG3, promotes aliphatic glucosinolate biosynthesis and represses indolic glucosinolate biosynthesis, but could not activate AGSL biosynthesis on its own. This Arabidopsis thaliana (Mouse-ear cress) protein is Transcription factor MYB76 (MYB76).